A 449-amino-acid chain; its full sequence is Signal recognition particle protein (449 aa).

Residues 109 to 116 (GLQGSGKT), 191 to 195 (DTAGR), and 249 to 252 (SRID) contribute to the GTP site.

The protein belongs to the GTP-binding SRP family. SRP54 subfamily. In terms of assembly, part of the signal recognition particle protein translocation system, which is composed of SRP and FtsY. SRP is a ribonucleoprotein composed of Ffh and a 4.5S RNA molecule.

It localises to the cytoplasm. The catalysed reaction is GTP + H2O = GDP + phosphate + H(+). In terms of biological role, involved in targeting and insertion of nascent membrane proteins into the cytoplasmic membrane. Binds to the hydrophobic signal sequence of the ribosome-nascent chain (RNC) as it emerges from the ribosomes. The SRP-RNC complex is then targeted to the cytoplasmic membrane where it interacts with the SRP receptor FtsY. Interaction with FtsY leads to the transfer of the RNC complex to the Sec translocase for insertion into the membrane, the hydrolysis of GTP by both Ffh and FtsY, and the dissociation of the SRP-FtsY complex into the individual components. In Rickettsia bellii (strain RML369-C), this protein is Signal recognition particle protein.